Here is a 407-residue protein sequence, read N- to C-terminus: 4-hydroxybenzoate polyprenyltransferase, mitochondrial (407 aa).

The transit peptide at 1-20 (MAFFGLSRVSRRLLKSSVSV) directs the protein to the mitochondrion. A run of 6 helical transmembrane segments spans residues 137 to 157 (IGTW…ADPG), 162 to 182 (FKYM…GCTI), 210 to 230 (FQGI…LLQL), 254 to 274 (FTFW…LLGW), 279 to 299 (GSIA…WTLV), and 330 to 350 (LWLT…GFSA).

The protein belongs to the UbiA prenyltransferase family. Mg(2+) is required as a cofactor. Expressed in flowers.

The protein resides in the mitochondrion inner membrane. The catalysed reaction is an all-trans-polyprenyl diphosphate + 4-hydroxybenzoate = a 4-hydroxy-3-(all-trans-polyprenyl)benzoate + diphosphate. Its pathway is cofactor biosynthesis; ubiquinone biosynthesis. Catalyzes the prenylation of para-hydroxybenzoate (PHB) with an all-trans polyprenyl group. Mediates the second step in the final reaction sequence of coenzyme Q (CoQ) biosynthesis, which is the condensation of the polyisoprenoid side chain with PHB, generating the first membrane-bound Q intermediate. Required for embryo development. This is 4-hydroxybenzoate polyprenyltransferase, mitochondrial from Arabidopsis thaliana (Mouse-ear cress).